The primary structure comprises 313 residues: Catalase-related peroxidase (313 aa).

The active site involves H28. Position 294 (Y294) interacts with heme.

The protein belongs to the catalase family. In terms of assembly, monomer. Requires heme as cofactor.

Has an organic peroxide-dependent peroxidase activity. Exhibits strong peroxidase activity using organic hydroperoxides as cosubstrates, weak peroxidase activity using hydrogen peroxide and negligible catalase activity. May have a role in elimination of reactive oxygen species, in particular by deactivating hydroperoxides. The polypeptide is Catalase-related peroxidase (Mycolicibacterium paratuberculosis (strain ATCC BAA-968 / K-10) (Mycobacterium paratuberculosis)).